A 427-amino-acid polypeptide reads, in one-letter code: ATP-sensitive inward rectifier potassium channel 12 (427 aa).

Over 1–77 (MTAASRANPY…LADMFTTCVD (77 aa)) the chain is Cytoplasmic. At C75 the chain carries S-nitrosocysteine. Residues 78-104 (IRWRYMLLIFSLAFLASWLLFGIIFWV) traverse the membrane as a helical segment. R79 and R81 together coordinate a 1,2-diacyl-sn-glycero-3-phospho-(1D-myo-inositol-4,5-bisphosphate). Over 105–129 (IAVAHGDLEPAEGRGRTPCVLQVHG) the chain is Extracellular. Cysteines 123 and 155 form a disulfide. Residues 130–146 (FMAAFLFSIETQTTIGY) constitute an intramembrane region (helical; Pore-forming). 4 residues coordinate K(+): T143, I144, G145, and Y146. The Selectivity filter signature appears at 143–148 (TIGYGL). Over 147–155 (GLRCVTEEC) the chain is Extracellular. The chain crosses the membrane as a helical span at residues 156 to 183 (PVAVFMVVAQSIVGCIIDSFMIGAIMAK). A 1,2-diacyl-sn-glycero-3-phospho-(1D-myo-inositol-4,5-bisphosphate) contacts are provided by K183 and K188. Topologically, residues 184 to 427 (MGRPKKRAQT…ERPYRRESEI (244 aa)) are cytoplasmic. Positions 387 to 427 (DEEDEVATDRDGRSPQPEHDFDRLQASSGALERPYRRESEI) are disordered. The span at 393–409 (ATDRDGRSPQPEHDFDR) shows a compositional bias: basic and acidic residues. The PDZ-binding signature appears at 425–427 (SEI).

The protein belongs to the inward rectifier-type potassium channel (TC 1.A.2.1) family. KCNJ12 subfamily. As to quaternary structure, homotetramer. Forms heteromer with KCNJ4. Can form heteromeric channels with Kir2.6/KCNJ18. Association, via its PDZ-recognition domain, with LIN7A, LIN7B, LIN7C, DLG1, CASK and APBA1 plays a key role in its localization and trafficking. Highest level in cerebellum. Moderately found in kidney, forebrain and skeletal muscle. Not detected in uterus, liver and pancreas.

Its subcellular location is the membrane. It localises to the cell membrane. It is found in the sarcolemma. The protein resides in the T-tubule. The catalysed reaction is K(+)(in) = K(+)(out). With respect to regulation, activated by phosphatidylinositol 4,5-biphosphate (PtdIns(4,5)P2). PtdIns(4,5)P2 binding to the cytoplasmic side of the channel triggers a conformation change leading to channel opening. Inhibited by Ba(2+). Inward rectifying potassium channel that probably participates in controlling the resting membrane potential in electrically excitable cells. It probably participates in establishing action potential waveform and excitability of neuronal and muscle tissues. Inward rectifier potassium channels are characterized by a greater tendency to allow potassium to flow into the cell rather than out of it. Their voltage dependence is regulated by the concentration of extracellular potassium; as external potassium is raised, the voltage range of the channel opening shifts to more positive voltages. The inward rectification is mainly due to the blockage of outward current by internal magnesium. The protein is ATP-sensitive inward rectifier potassium channel 12 (Kcnj12) of Rattus norvegicus (Rat).